Reading from the N-terminus, the 500-residue chain is Lysine--tRNA ligase (500 aa).

Residues E410 and E417 each coordinate Mg(2+).

The protein belongs to the class-II aminoacyl-tRNA synthetase family. In terms of assembly, homodimer. Requires Mg(2+) as cofactor.

The protein localises to the cytoplasm. The catalysed reaction is tRNA(Lys) + L-lysine + ATP = L-lysyl-tRNA(Lys) + AMP + diphosphate. This Shewanella sp. (strain ANA-3) protein is Lysine--tRNA ligase.